The primary structure comprises 35 residues: Photosystem II reaction center protein T (35 aa).

The chain crosses the membrane as a helical span at residues 3–23 (ALVYTFLLVSTLGIIFFAIFF).

The protein belongs to the PsbT family. In terms of assembly, PSII is composed of 1 copy each of membrane proteins PsbA, PsbB, PsbC, PsbD, PsbE, PsbF, PsbH, PsbI, PsbJ, PsbK, PsbL, PsbM, PsbT, PsbY, PsbZ, Psb30/Ycf12, at least 3 peripheral proteins of the oxygen-evolving complex and a large number of cofactors. It forms dimeric complexes.

It localises to the plastid. The protein localises to the chloroplast thylakoid membrane. In terms of biological role, found at the monomer-monomer interface of the photosystem II (PS II) dimer, plays a role in assembly and dimerization of PSII. PSII is a light-driven water plastoquinone oxidoreductase, using light energy to abstract electrons from H(2)O, generating a proton gradient subsequently used for ATP formation. The polypeptide is Photosystem II reaction center protein T (Suaeda aralocaspica (Seablite)).